The sequence spans 676 residues: Methionine--tRNA ligase (676 aa).

The 'HIGH' region motif lies at 15-25 (PYANGSIHLGH). 4 residues coordinate Zn(2+): Cys-146, Cys-149, Cys-159, and Cys-162. A 'KMSKS' region motif is present at residues 332 to 336 (KMSKS). Lys-335 is a binding site for ATP. The 103-residue stretch at 574 to 676 (DFAKVDMRIA…SGAQPGQQVK (103 aa)) folds into the tRNA-binding domain.

It belongs to the class-I aminoacyl-tRNA synthetase family. MetG type 1 subfamily. As to quaternary structure, homodimer. Requires Zn(2+) as cofactor.

It localises to the cytoplasm. The catalysed reaction is tRNA(Met) + L-methionine + ATP = L-methionyl-tRNA(Met) + AMP + diphosphate. Is required not only for elongation of protein synthesis but also for the initiation of all mRNA translation through initiator tRNA(fMet) aminoacylation. This is Methionine--tRNA ligase from Erwinia tasmaniensis (strain DSM 17950 / CFBP 7177 / CIP 109463 / NCPPB 4357 / Et1/99).